A 131-amino-acid polypeptide reads, in one-letter code: Small ribosomal subunit protein uS10m (131 aa).

This sequence belongs to the universal ribosomal protein uS10 family.

The protein localises to the mitochondrion. The protein is Small ribosomal subunit protein uS10m (mrps10) of Dictyostelium discoideum (Social amoeba).